Consider the following 215-residue polypeptide: MRVILLGAPGAGKGTQARYITEKFGIPQISTGDMLRAAVKAGTELGLKAKSVMDAGGLVSDDLIINLVKERIAQPDCANGFLFDGFPRTIPQAEALRDAGVTLDHVVEIAVDDEEIVKRLSGRRVHPASGRVYHTEYNPPKVAGKDDVSGEELVQREDDKEETVRHRLSVYHSQTKPLVDFYQKLSAETGTPKYSHIPGVGSVEDITAKTLAALD.

Position 10–15 (10–15 (GAGKGT)) interacts with ATP. Residues 30 to 59 (STGDMLRAAVKAGTELGLKAKSVMDAGGLV) are NMP. AMP is bound by residues T31, R36, 57-59 (GLV), 85-88 (GFPR), and Q92. An LID region spans residues 122–159 (GRRVHPASGRVYHTEYNPPKVAGKDDVSGEELVQREDD). Residues R123 and 132 to 133 (VY) contribute to the ATP site. AMP-binding residues include R156 and R167. ATP is bound at residue G201.

Belongs to the adenylate kinase family. Monomer.

It localises to the cytoplasm. The enzyme catalyses AMP + ATP = 2 ADP. Its pathway is purine metabolism; AMP biosynthesis via salvage pathway; AMP from ADP: step 1/1. Catalyzes the reversible transfer of the terminal phosphate group between ATP and AMP. Plays an important role in cellular energy homeostasis and in adenine nucleotide metabolism. The polypeptide is Adenylate kinase (Ectopseudomonas mendocina (strain ymp) (Pseudomonas mendocina)).